Here is an 84-residue protein sequence, read N- to C-terminus: MVSIRLARGGAKKRPFYHVVVAESRSKRDGRYIERVGFFNPIARGQEERLRLDESRIAYWIGTGAKPSDRVVSLIKEFKKQQQV.

Belongs to the bacterial ribosomal protein bS16 family.

The protein is Small ribosomal subunit protein bS16 of Methylococcus capsulatus (strain ATCC 33009 / NCIMB 11132 / Bath).